The primary structure comprises 305 residues: uncharacterized protein (305 aa).

Residues 1 to 10 show a composition bias toward basic residues; it reads MLWAQRKKRK. The tract at residues 1–30 is disordered; sequence MLWAQRKKRKATTETTEDKPAESHRPNDSW. Basic and acidic residues predominate over residues 16 to 27; it reads TEDKPAESHRPN. Residue Ser39 is modified to Phosphoserine. The segment covering 92-101 has biased composition (polar residues); sequence QKISGTSVSK. Residues 92-114 form a disordered region; sequence QKISGTSVSKEMQRESGKSPSME. Ser158 bears the Phosphoserine mark. The span at 197 to 208 shows a compositional bias: low complexity; it reads SHHGNQSHQNHN. Residues 197 to 305 are disordered; that stretch reads SHHGNQSHQN…VNRRNQIYDS (109 aa). Polar residues-rich tracts occupy residues 209-221 and 231-244; these read TYPCHQNNQSRSV and LSHQGYPSYSSHQN. The span at 247–293 shows a compositional bias: low complexity; it reads GHPSQQGHSSHSNQQGHLGLSSQQGHPSQSSHQSHQGQPGHPNHQSH. Positions 294 to 305 are enriched in polar residues; the sequence is SLVNRRNQIYDS.

This is an uncharacterized protein from Rattus norvegicus (Rat).